The chain runs to 86 residues: Small ribosomal subunit protein uS17 (86 aa).

The protein belongs to the universal ribosomal protein uS17 family. Part of the 30S ribosomal subunit.

In terms of biological role, one of the primary rRNA binding proteins, it binds specifically to the 5'-end of 16S ribosomal RNA. The sequence is that of Small ribosomal subunit protein uS17 from Streptococcus equi subsp. equi (strain 4047).